A 392-amino-acid polypeptide reads, in one-letter code: Alaserpin (392 aa).

A signal peptide spans 1–16 (MKIIMCIFGLAALAMA). A glycan (N-linked (GlcNAc...) asparagine) is linked at N85.

Belongs to the serpin family. As to expression, hemolymph.

The protein resides in the secreted. It is found in the extracellular space. Its function is as follows. Inhibits elastase. The protein is Alaserpin of Manduca sexta (Tobacco hawkmoth).